The chain runs to 430 residues: Cytochrome c biogenesis protein CcsB (430 aa).

The next 3 membrane-spanning stretches (helical) occupy residues 14–34, 72–92, and 162–182; these read LRLA…GTIL, SVWF…CSWR, and VGPL…AWGA.

This sequence belongs to the Ccs1/CcsB family. As to quaternary structure, may interact with CcsA.

It localises to the cellular thylakoid membrane. In terms of biological role, required during biogenesis of c-type cytochromes (cytochrome c6 and cytochrome f) at the step of heme attachment. The chain is Cytochrome c biogenesis protein CcsB from Synechococcus sp. (strain WH7803).